Reading from the N-terminus, the 169-residue chain is Myelin basic protein (169 aa).

Alanine 1 is modified (N-acetylalanine). Residues 1–114 (AAQKRPSQRS…GRGLSLSRFS (114 aa)) are disordered. Serine 7 carries the post-translational modification Phosphoserine; in C5 and C6. Phosphoserine is present on serine 10. Tyrosine 12 is modified (phosphotyrosine). Serine 17 carries the phosphoserine modification. Phosphothreonine is present on threonine 18. Arginine 23 is subject to Citrulline; in form C8b. At arginine 29 the chain carries Citrulline. Threonine 33 is modified (phosphothreonine). Serine 38 is modified (phosphoserine). Arginine 41 carries the post-translational modification Citrulline; alternate. The residue at position 41 (arginine 41) is an Omega-N-methylarginine; alternate. An induces experimental autoimmune encephalomyelitis (EAE) 1 region spans residues 43 to 87 (FGSDRGAPKRGSGKDGHHAARTTHYGSLPQKAQGHRPQDENPVVH). Arginine 47 is subject to Citrulline; in form C8b. The residue at position 47 (arginine 47) is an Omega-N-methylarginine. Serine 54 is subject to Phosphoserine; in C4, C5 and C6. The residue at position 63 (arginine 63) is a Citrulline. Residue threonine 65 is modified to Phosphothreonine. Tyrosine 67 carries the phosphotyrosine modification. Position 94 is a phosphothreonine (threonine 94). Arginine 96 carries the post-translational modification Citrulline; in form C2, C3, C8a and C8b. Threonine 97 bears the Phosphothreonine; by MAPK; in C3, C4, C5 and C6 mark. Glutamine 102 bears the Deamidated glutamine; in form C5 mark. Arginine 106 carries the citrulline; alternate modification. Arginine 106 is subject to Omega-N-methylarginine; alternate. Arginine 106 carries the post-translational modification Symmetric dimethylarginine; alternate. Residue arginine 112 is modified to Citrulline. A Phosphoserine modification is found at serine 114. An induces experimental autoimmune encephalomyelitis (EAE) 2 region spans residues 114 to 122 (SWGAEGQKP). Glutamine 120 is subject to Deamidated glutamine; in form C3. An N6-acetyllysine modification is found at lysine 121. Arginine 129 is modified (citrulline). Residues 133–169 (YKSAHKGLKGHDAQGTLSKIFKLGGRDSRSGSPMARR) are disordered. Glutamine 146 carries the deamidated glutamine; in form C2 modification. A Citrulline modification is found at arginine 158. Serine 160 bears the Phosphoserine; in C4 and C6 mark. Arginine 161 is modified (citrulline; in form C3). Serine 164 bears the Phosphoserine; in form C3, C5 and C6 mark. Citrulline is present on residues arginine 168 and arginine 169.

It belongs to the myelin basic protein family. In terms of assembly, homodimer; self-associates in the presence of lysolipid. In terms of processing, at least 6 charge isomers; C1 (the most cationic and least modified form), C2, C3, C4, C5 and C6 (the least cationic form); are produced as a result of optional post-translational modifications, such as phosphorylation of serine or threonine residues, deamidation of glutamine or asparagine residues, citrullination and methylation of arginine residues. Post-translationally, phosphorylated by TAOK2, VRK2, MAPK11, MAPK12, MAPK14 and MINK1. Proteolytically cleaved in B cell lysosomes by cathepsin CTSG which degrades the major immunogenic MBP epitope and prevents the activation of MBP-specific autoreactive T cells. Found in both the central and the peripheral nervous system.

It is found in the myelin membrane. Is, with PLP, the most abundant protein component of the myelin membrane in the CNS. Has a role in both the formation and stabilization of this compact multilayer arrangement of bilayers. Each splice variant and charge isomer may have a specialized function in the assembly of an optimized, biochemically functional myelin membrane. The polypeptide is Myelin basic protein (MBP) (Bos taurus (Bovine)).